The chain runs to 144 residues: Large ribosomal subunit protein uL13 (144 aa).

The protein belongs to the universal ribosomal protein uL13 family. In terms of assembly, part of the 50S ribosomal subunit.

In terms of biological role, this protein is one of the early assembly proteins of the 50S ribosomal subunit, although it is not seen to bind rRNA by itself. It is important during the early stages of 50S assembly. The chain is Large ribosomal subunit protein uL13 from Clostridium perfringens (strain ATCC 13124 / DSM 756 / JCM 1290 / NCIMB 6125 / NCTC 8237 / Type A).